The primary structure comprises 72 residues: Small ribosomal subunit protein eS17 (72 aa).

This sequence belongs to the eukaryotic ribosomal protein eS17 family.

The chain is Small ribosomal subunit protein eS17 from Nanoarchaeum equitans (strain Kin4-M).